The chain runs to 138 residues: SHSKHHATYVKGVNDAIAKLEEARANGDHGAIFLHEKNLAFHLGGHVNHTIWWKNLSPHGGDKPTGDLAAAIDDQFGSFDNFRAQFTAAANGLQGSGWAVLGYDTLGDRLLTFQLYDQQANVPLGIIPLLLVDMWEHA.

4 residues coordinate Mn(2+): histidine 2, histidine 49, aspartate 133, and histidine 137.

This sequence belongs to the iron/manganese superoxide dismutase family. Mn(2+) serves as cofactor.

The catalysed reaction is 2 superoxide + 2 H(+) = H2O2 + O2. Destroys superoxide anion radicals which are normally produced within the cells and which are toxic to biological systems. This is Superoxide dismutase [Mn] (sodA) from Mycolicibacterium phlei (Mycobacterium phlei).